The sequence spans 449 residues: Agmatine hydroxycinnamoyltransferase 1 (449 aa).

Catalysis depends on proton acceptor residues His153 and Asp392.

This sequence belongs to the plant acyltransferase family. Highly expressed in roots. Expressed at low levels in flowers.

Hydroxycinnamoyl transferase that catalyzes the transfer of an acyl from p-coumaryol-CoA to agmatine, to produce coumaroyl agmatine. Can use feruloyl-CoA, caffeoyl-CoA and sinapoyl-CoA as acyl donors. Seems to be able to transfer the acyl group from p-coumaroyl-CoA and feruloyl-CoA to the acyl acceptors putrescine and spermidine. This is Agmatine hydroxycinnamoyltransferase 1 from Oryza sativa subsp. japonica (Rice).